We begin with the raw amino-acid sequence, 399 residues long: Glutathione-independent formaldehyde dehydrogenase (399 aa).

C47 contributes to the Zn(2+) binding site. NAD(+)-binding residues include G48, S49, and H52. Zn(2+) is bound by residues H68, C98, C101, C104, C112, and D170. 8 residues coordinate NAD(+): V198, D218, R223, V263, R268, P300, Q338, and T339.

The protein belongs to the zinc-containing alcohol dehydrogenase family. In terms of assembly, homotetramer. It depends on Zn(2+) as a cofactor.

The enzyme catalyses formaldehyde + NAD(+) + H2O = formate + NADH + 2 H(+). It catalyses the reaction acetaldehyde + NAD(+) + H2O = acetate + NADH + 2 H(+). Its function is as follows. Dehydrogenase that catalyzes the NAD(+)-dependent oxidation of formaldehyde and acetaldehyde. Shows no detectable activity against either aldehydes with longer carbon chains or ethanol. The polypeptide is Glutathione-independent formaldehyde dehydrogenase (Pseudomonas aeruginosa (strain LESB58)).